The chain runs to 143 residues: General odorant-binding protein 28a (143 aa).

The first 21 residues, 1–21 (MQSTPIILVAIVLLGAALVRA), serve as a signal peptide directing secretion. 3 disulfide bridges follow: C38-C69, C65-C123, and C113-C132.

As to expression, expressed in antenna, mostly on the medial and posterior surface of the third antennal segment.

It localises to the secreted. This is General odorant-binding protein 28a (Obp28a) from Drosophila melanogaster (Fruit fly).